A 147-amino-acid chain; its full sequence is Small ribosomal subunit protein bS16m (147 aa).

This sequence belongs to the bacterial ribosomal protein bS16 family. In terms of assembly, component of the mitochondrial ribosome small subunit (28S) which comprises a 12S rRNA and about 30 distinct proteins.

Its subcellular location is the mitochondrion. The polypeptide is Small ribosomal subunit protein bS16m (mrps-16) (Caenorhabditis elegans).